The sequence spans 349 residues: Protein-glutamate methylesterase/protein-glutamine glutaminase (349 aa).

The region spanning 5–122 is the Response regulatory domain; the sequence is RVLSVDDSAL…REGMLAYSEM (118 aa). Position 56 is a 4-aspartylphosphate (Asp-56). One can recognise a CheB-type methylesterase domain in the interval 152–344; it reads LLSSEKLIAI…QQMLATISAG (193 aa). Active-site residues include Ser-164, His-190, and Asp-286.

The protein belongs to the CheB family. Phosphorylated by CheA. Phosphorylation of the N-terminal regulatory domain activates the methylesterase activity.

It localises to the cytoplasm. It carries out the reaction [protein]-L-glutamate 5-O-methyl ester + H2O = L-glutamyl-[protein] + methanol + H(+). The catalysed reaction is L-glutaminyl-[protein] + H2O = L-glutamyl-[protein] + NH4(+). Functionally, involved in chemotaxis. Part of a chemotaxis signal transduction system that modulates chemotaxis in response to various stimuli. Catalyzes the demethylation of specific methylglutamate residues introduced into the chemoreceptors (methyl-accepting chemotaxis proteins or MCP) by CheR. Also mediates the irreversible deamidation of specific glutamine residues to glutamic acid. This is Protein-glutamate methylesterase/protein-glutamine glutaminase from Shigella flexneri.